Here is a 408-residue protein sequence, read N- to C-terminus: Interferon-activable protein 203 (408 aa).

The Pyrin domain maps to 1–87 (MAEYKNIVLL…AKKLKTEKAK (87 aa)). A disordered region spans residues 84–208 (EKAKVQEKKK…EGHHQGPKQV (125 aa)). Over residues 92 to 102 (KKGKCKTAGKK) the composition is skewed to basic residues. Over residues 150 to 159 (AQLPETSGTN) the composition is skewed to polar residues. The 199-residue stretch at 190–388 (TVPKEPSREE…SVRHSYMQVI (199 aa)) folds into the HIN-200 domain.

The protein belongs to the HIN-200 family. In terms of tissue distribution, constitutively expressed in the thymus, bone marrow and spleen. Isoform 1 and isoform 3 are present in liver (at protein level).

It localises to the nucleus. The sequence is that of Interferon-activable protein 203 (Ifi203) from Mus musculus (Mouse).